Consider the following 372-residue polypeptide: Alanine dehydrogenase 1 (372 aa).

Residue H94 is part of the active site. 170 to 200 contacts NAD(+); that stretch reads TYVIFGGGVAATNAANVALGLNAKVIIIELN.

The protein belongs to the AlaDH/PNT family.

The catalysed reaction is L-alanine + NAD(+) + H2O = pyruvate + NH4(+) + NADH + H(+). It participates in amino-acid degradation; L-alanine degradation via dehydrogenase pathway; NH(3) and pyruvate from L-alanine: step 1/1. Its function is as follows. May play a role in cell wall synthesis as L-alanine is an important constituent of the peptidoglycan layer. The chain is Alanine dehydrogenase 1 (ald1) from Staphylococcus aureus (strain MRSA252).